The sequence spans 352 residues: Inner membrane protein YeeA (352 aa).

The Cytoplasmic segment spans residues 1 to 25; sequence MRADKSLSPFEIRVYRHYRIVHGTR. Transmembrane regions (helical) follow at residues 26-46 and 47-67; these read VALA…PEST and WPLV…NVVP. A topological domain (cytoplasmic) is located at residue arginine 68. The chain crosses the membrane as a helical span at residues 69-89; it reads AFERIGGTVLGSILGLIALQL. A topological domain (periplasmic) is located at residue glutamate 90. The chain crosses the membrane as a helical span at residues 91–111; the sequence is LISLPLMLVWCAAAMFLCGWL. Topologically, residues 112–117 are cytoplasmic; the sequence is ALGKKP. A helical transmembrane segment spans residues 118 to 138; sequence YQGLLIGVTLAIVVGSPTGEI. Residues 139 to 147 lie on the Periplasmic side of the membrane; it reads DTALWRSGD. The chain crosses the membrane as a helical span at residues 148–168; the sequence is VILGSLLAMLFTGIWPQRAFI. The Cytoplasmic portion of the chain corresponds to 169 to 352; sequence HWRIQLAKSL…SNLICRALRK (184 aa).

The protein resides in the cell inner membrane. This Escherichia coli (strain K12) protein is Inner membrane protein YeeA (yeeA).